Here is a 271-residue protein sequence, read N- to C-terminus: MSVEQSLLGKETEYPTTYSPSVLFPISRDAAREKYAQIEGISQGKDWWHVFELSWLNSDNIPQVAIGRITLPATSPYLIESKSLKLYFNSLNFHVFASKQELIDLVEKDLSQAANAKVSLELFDVDSLEISKPSGMCIDDLKPERLESHPDASLLKLDANEQHDADVTLYSHLLRSNCPVTGQPDWGTVFIRYTGRKHCYRSILAYIISYRQHNGFHEQCVEQIYADIWKNLQPEKLMVYATYTRRGGLDINPCRVSDLSWMPNPIRLARQ.

Residue 79–81 (IES) coordinates substrate. 81 to 82 (SK) contributes to the NADPH binding site. The active-site Thioimide intermediate is the C178. The Proton donor role is filled by D185. Substrate is bound at residue 217-218 (HE). Residue 246–247 (RG) coordinates NADPH.

It belongs to the GTP cyclohydrolase I family. QueF type 2 subfamily. In terms of assembly, homodimer.

It localises to the cytoplasm. It carries out the reaction 7-aminomethyl-7-carbaguanine + 2 NADP(+) = 7-cyano-7-deazaguanine + 2 NADPH + 3 H(+). Its pathway is tRNA modification; tRNA-queuosine biosynthesis. In terms of biological role, catalyzes the NADPH-dependent reduction of 7-cyano-7-deazaguanine (preQ0) to 7-aminomethyl-7-deazaguanine (preQ1). This chain is NADPH-dependent 7-cyano-7-deazaguanine reductase, found in Acinetobacter baylyi (strain ATCC 33305 / BD413 / ADP1).